Here is a 2797-residue protein sequence, read N- to C-terminus: Nonribosomal peptide synthetase penN (2797 aa).

An adenylation 1 region spans residues 239-625 (SRPDHPAICA…ARKDSQVKIR (387 aa)). The Carrier 1 domain occupies 751–824 (TDTERHVHRF…DIVSLVRTAT (74 aa)). O-(pantetheine 4'-phosphoryl)serine is present on Ser785. The tract at residues 830–856 (PSAGAEISRSDAPTESPATGSFEGSGY) is disordered. Residues 870-1299 (QSFSQARMWF…DIEIGSLLLT (430 aa)) form a condensation 1 region. The segment at 1328–1731 (FHQQVAAHGD…GRMDQQVKIR (404 aa)) is adenylation 2. The tract at residues 1857-1953 (LEIGTGTGMI…VIKQLIQLHD (97 aa)) is methyltransferase. The Carrier 2 domain occupies 2277–2351 (SFTDDIERAM…RLAGRVRGFR (75 aa)). An O-(pantetheine 4'-phosphoryl)serine modification is found at Ser2311. Positions 2516–2658 (YDGISLSSIL…VNRTLIRVQL (143 aa)) are condensation 2.

This sequence belongs to the NRP synthetase family.

The catalysed reaction is O-methyl-L-tyrosine + anthranilate + S-adenosyl-L-methionine + 2 ATP = (-)-4'-methoxycyclopeptine + 2 AMP + S-adenosyl-L-homocysteine + 2 diphosphate + 2 H(+). It carries out the reaction anthranilate + L-phenylalanine + S-adenosyl-L-methionine + 2 ATP = cyclopeptine + 2 AMP + S-adenosyl-L-homocysteine + 2 diphosphate + 2 H(+). Its pathway is secondary metabolite biosynthesis. It functions in the pathway alkaloid biosynthesis. The protein operates within mycotoxin biosynthesis. Its function is as follows. Nonribosomal peptide synthetase; part of the gene cluster that mediates the biosynthesis of penigequinolones, potent insecticidal alkaloids that contain a highly modified 10-carbon prenyl group. The first stage is catalyzed by the nonribosomal peptide synthetase penN that condenses anthranilic acid and O-methyl-L-tyrosine to produce 4'-methoxycyclopeptin. 4'-methoxycyclopeptin is then converted to 4'-methoxydehydrocyclopeptin by the ketoglutarate-dependent dioxygenase penM through dehydrogenation to form a double bond between C-alpha and C-beta of the O-methyltyrosine side chain. PenM also converts its first product methoxydehydrocyclopeptin to 4'-methoxycyclopenin. The following conversion of 4'methoxycyclopenin into 4'-methoxyviridicatin is catalyzed by the cyclopenase penL. 4'-methoxyviridicatin is the precursor of quinolone natural products, and is further converted to quinolinone B. The prenyltransferase penI then catalyzes the canonical Friedel-Crafts alkylation of quinolinone B with dimethylallyl cation to yield dimethylallyl quinolone, which is subjected to FAD-dependent dehydrogenation by the FAD-linked oxidoreductase penH to yield conjugated aryl diene. The delta(3') double bond then serves as the site of the second alkylation with DMAPP catalyzed by the prenyltransferase penG to yield a carbenium ion intermediate, which can be attacked by H(2)O to yield a styrenyl quinolone containing a C3'-hydroxyprenyl chain, or undergo cyclization to yield yaequinolones J1 and J2. The conversion of the styrenyl quinolone into the tetrahydrofuran-containing yaequinolone C is performed by the FAD-dependent monooxygenase penE and involves epoxidation of the terminal C7'-C8' olefin, followed by epoxide ring opening initiated by the C3' hydroxyl group. The predicted cysteine hydrolase penJ acts as an epoxide hydrolase that enhances the rate of the 5-exo-tet cyclization step, increasing the yield of yaequinolone C. PenF catalyzes the cationic rearrangement of the epoxide formed by penE (before ring opening to produce yaequinolone C) into yaequinolone D. Finally, the short-chain dehydrogenase/reductase (SDR)-like reductase penD, catalyzes both the dehydration of yaequinolone D and the reduction of the resulting oxonium to yield penigequinolone. In Penicillium thymicola, this protein is Nonribosomal peptide synthetase penN.